The primary structure comprises 497 residues: uncharacterized protein (497 aa).

Ca(2+) contacts are provided by Asp-12, Thr-13, and Cys-52. Cys-52 (nucleophile) is an active-site residue. At Cys-52 the chain carries 3-oxoalanine (Cys). The active site involves His-102. The Ca(2+) site is built by Asp-284 and His-285.

This sequence belongs to the sulfatase family. Ca(2+) is required as a cofactor. The conversion to 3-oxoalanine (also known as C-formylglycine, FGly), of a serine or cysteine residue in prokaryotes and of a cysteine residue in eukaryotes, is critical for catalytic activity.

This is an uncharacterized protein from Escherichia coli (strain K12).